The following is a 464-amino-acid chain: GTPase Der (464 aa).

EngA-type G domains lie at 3 to 166 and 177 to 350; these read PTIA…AVES and LKMA…QAAT. Residues 9–16, 56–60, 118–121, 183–190, 230–234, and 295–298 each bind GTP; these read GRPNVGKS, DTGGI, NKVD, DTAGV, and NKWD. Residues 351–435 form the KH-like domain; that stretch reads EKYSTSFLTR…PVRIEYRSGD (85 aa).

The protein belongs to the TRAFAC class TrmE-Era-EngA-EngB-Septin-like GTPase superfamily. EngA (Der) GTPase family. As to quaternary structure, associates with the 50S ribosomal subunit.

In terms of biological role, GTPase that plays an essential role in the late steps of ribosome biogenesis. The protein is GTPase Der of Teredinibacter turnerae (strain ATCC 39867 / T7901).